The primary structure comprises 216 residues: Uracil phosphoribosyltransferase (216 aa).

5-phospho-alpha-D-ribose 1-diphosphate-binding positions include Arg-85, Arg-110, and 135 to 143 (DPMVATGYS). Uracil is bound by residues Ile-200 and 205-207 (GDA). A 5-phospho-alpha-D-ribose 1-diphosphate-binding site is contributed by Asp-206.

Belongs to the UPRTase family. Requires Mg(2+) as cofactor.

It catalyses the reaction UMP + diphosphate = 5-phospho-alpha-D-ribose 1-diphosphate + uracil. Its pathway is pyrimidine metabolism; UMP biosynthesis via salvage pathway; UMP from uracil: step 1/1. With respect to regulation, allosterically activated by GTP. Functionally, catalyzes the conversion of uracil and 5-phospho-alpha-D-ribose 1-diphosphate (PRPP) to UMP and diphosphate. The polypeptide is Uracil phosphoribosyltransferase (Burkholderia thailandensis (strain ATCC 700388 / DSM 13276 / CCUG 48851 / CIP 106301 / E264)).